Reading from the N-terminus, the 227-residue chain is Probable septum site-determining protein MinC (227 aa).

It belongs to the MinC family. As to quaternary structure, interacts with MinD and FtsZ.

Cell division inhibitor that blocks the formation of polar Z ring septums. Rapidly oscillates between the poles of the cell to destabilize FtsZ filaments that have formed before they mature into polar Z rings. Prevents FtsZ polymerization. The sequence is that of Probable septum site-determining protein MinC from Geobacillus thermodenitrificans (strain NG80-2).